Reading from the N-terminus, the 504-residue chain is MGVYSVLLAIVVVLVGYLLLKWRRALHYWQNLDIPCEEPHILMGSLTGVQTSRSFSAIWMDYYNKFRGTGPFAGFYWFQRPGILVLDISLAKLILIKEFNKFTDRGFYHNTEDDPLSGQLFLLDGQKWKSMRSKLSYTFTSGKMKYMFPTVVKVGHEFIEVFGQAMEKSPIVEVRDILARFTTDVIGTCAFGIECSSLKDPEAEFRVMGRRAIFEQRHGPIGIAFINSFQNLARRLHMKITLEEAEHFFLRIVRETVAFREKNNIRRNDFMDQLIDLKNSPLTKSESGESVNLTIEEMAAQAFVFFGAGFETSSTTMGFALYELAQHQDIQDRVRKECQEVIGKYNGEITYESMKDMVYLDQVISETLRLYTVLPVLNRECLEDYEVPGHPKYVIKKGMPVLIPCGAMHRDEKLYANPNTFNPDNFSPERVKERDSVEWLPFGDGPRNCIGMRFGQMQARSGLALLINRFKFSVCEQTTIPIVYSKKTFLISSETGIFLKVERV.

Residue cysteine 449 participates in heme binding.

This sequence belongs to the cytochrome P450 family. Heme serves as cofactor.

The protein resides in the endoplasmic reticulum membrane. It is found in the microsome membrane. Functionally, involved in the metabolism of insect hormones and in the breakdown of synthetic insecticides. This Drosophila melanogaster (Fruit fly) protein is Cytochrome P450 6a9 (Cyp6a9).